Consider the following 272-residue polypeptide: MSEMEVMASIMRDHIIELLREGKRIDGRSFEDYRDLEIKVNVIEKAEGSAWVRLGDTQVLVGIKAELGEPFPDLPDRGVITTNVELVPLASPTFEPGPPDENAIELARVVDRGIRESQAVDLEKLVIVPGKLVRVIFIDVHVLDHGGNLLDASGIGAIAALLSTKLPKVNYNEETGEVEILDEYEPLPVNHVPIPVTFAKIGNSIVVDPSLDEERVMDGRLTITTDETGHISAAQKGEAGAFKMEEVMYALEVALKKGNEIREKVLKAVGRA.

This sequence belongs to the RNase PH family. Rrp42 subfamily. Component of the archaeal exosome complex. Forms a hexameric ring-like arrangement composed of 3 Rrp41-Rrp42 heterodimers. The hexameric ring associates with a trimer of Rrp4 and/or Csl4 subunits.

The protein resides in the cytoplasm. Functionally, non-catalytic component of the exosome, which is a complex involved in RNA degradation. Contributes to the structuring of the Rrp41 active site. In Thermococcus kodakarensis (strain ATCC BAA-918 / JCM 12380 / KOD1) (Pyrococcus kodakaraensis (strain KOD1)), this protein is Exosome complex component Rrp42.